A 258-amino-acid polypeptide reads, in one-letter code: Glutamate racemase (258 aa).

Substrate is bound by residues 11–12 (DS) and 43–44 (YG). Cys74 acts as the Proton donor/acceptor in catalysis. 75–76 (NT) provides a ligand contact to substrate. The active-site Proton donor/acceptor is Cys187. Residue 188-189 (TH) participates in substrate binding.

It belongs to the aspartate/glutamate racemases family.

The catalysed reaction is L-glutamate = D-glutamate. It functions in the pathway cell wall biogenesis; peptidoglycan biosynthesis. Its function is as follows. Provides the (R)-glutamate required for cell wall biosynthesis. This chain is Glutamate racemase, found in Bifidobacterium adolescentis (strain ATCC 15703 / DSM 20083 / NCTC 11814 / E194a).